We begin with the raw amino-acid sequence, 145 residues long: Transcriptional regulator MraZ (145 aa).

2 SpoVT-AbrB domains span residues Glu5–Glu47 and Ala76–Gln119.

This sequence belongs to the MraZ family. In terms of assembly, forms oligomers.

It localises to the cytoplasm. It is found in the nucleoid. In Pelotomaculum thermopropionicum (strain DSM 13744 / JCM 10971 / SI), this protein is Transcriptional regulator MraZ.